The chain runs to 193 residues: Leucyl/phenylalanyl-tRNA--protein transferase (193 aa).

Belongs to the L/F-transferase family.

The protein localises to the cytoplasm. The enzyme catalyses N-terminal L-lysyl-[protein] + L-leucyl-tRNA(Leu) = N-terminal L-leucyl-L-lysyl-[protein] + tRNA(Leu) + H(+). It carries out the reaction N-terminal L-arginyl-[protein] + L-leucyl-tRNA(Leu) = N-terminal L-leucyl-L-arginyl-[protein] + tRNA(Leu) + H(+). The catalysed reaction is L-phenylalanyl-tRNA(Phe) + an N-terminal L-alpha-aminoacyl-[protein] = an N-terminal L-phenylalanyl-L-alpha-aminoacyl-[protein] + tRNA(Phe). In terms of biological role, functions in the N-end rule pathway of protein degradation where it conjugates Leu, Phe and, less efficiently, Met from aminoacyl-tRNAs to the N-termini of proteins containing an N-terminal arginine or lysine. This chain is Leucyl/phenylalanyl-tRNA--protein transferase, found in Gloeobacter violaceus (strain ATCC 29082 / PCC 7421).